The primary structure comprises 315 residues: Methionyl-tRNA formyltransferase (315 aa).

113 to 116 (SLLP) is a (6S)-5,6,7,8-tetrahydrofolate binding site.

The protein belongs to the Fmt family.

The enzyme catalyses L-methionyl-tRNA(fMet) + (6R)-10-formyltetrahydrofolate = N-formyl-L-methionyl-tRNA(fMet) + (6S)-5,6,7,8-tetrahydrofolate + H(+). Attaches a formyl group to the free amino group of methionyl-tRNA(fMet). The formyl group appears to play a dual role in the initiator identity of N-formylmethionyl-tRNA by promoting its recognition by IF2 and preventing the misappropriation of this tRNA by the elongation apparatus. The sequence is that of Methionyl-tRNA formyltransferase from Escherichia fergusonii (strain ATCC 35469 / DSM 13698 / CCUG 18766 / IAM 14443 / JCM 21226 / LMG 7866 / NBRC 102419 / NCTC 12128 / CDC 0568-73).